The primary structure comprises 397 residues: Tryptophan synthase beta chain (397 aa).

An N6-(pyridoxal phosphate)lysine modification is found at K87.

The protein belongs to the TrpB family. As to quaternary structure, tetramer of two alpha and two beta chains. Requires pyridoxal 5'-phosphate as cofactor.

The catalysed reaction is (1S,2R)-1-C-(indol-3-yl)glycerol 3-phosphate + L-serine = D-glyceraldehyde 3-phosphate + L-tryptophan + H2O. It functions in the pathway amino-acid biosynthesis; L-tryptophan biosynthesis; L-tryptophan from chorismate: step 5/5. Its function is as follows. The beta subunit is responsible for the synthesis of L-tryptophan from indole and L-serine. The protein is Tryptophan synthase beta chain of Escherichia coli O127:H6 (strain E2348/69 / EPEC).